The chain runs to 264 residues: S-adenosylmethionine decarboxylase proenzyme (264 aa).

Serine 112 (schiff-base intermediate with substrate; via pyruvic acid) is an active-site residue. Serine 112 is subject to Pyruvic acid (Ser); by autocatalysis. The Proton acceptor; for processing activity role is filled by histidine 117. Residue cysteine 140 is the Proton donor; for catalytic activity of the active site.

The protein belongs to the prokaryotic AdoMetDC family. Type 2 subfamily. As to quaternary structure, heterooctamer of four alpha and four beta chains arranged as a tetramer of alpha/beta heterodimers. Pyruvate is required as a cofactor. In terms of processing, is synthesized initially as an inactive proenzyme. Formation of the active enzyme involves a self-maturation process in which the active site pyruvoyl group is generated from an internal serine residue via an autocatalytic post-translational modification. Two non-identical subunits are generated from the proenzyme in this reaction, and the pyruvate is formed at the N-terminus of the alpha chain, which is derived from the carboxyl end of the proenzyme. The post-translation cleavage follows an unusual pathway, termed non-hydrolytic serinolysis, in which the side chain hydroxyl group of the serine supplies its oxygen atom to form the C-terminus of the beta chain, while the remainder of the serine residue undergoes an oxidative deamination to produce ammonia and the pyruvoyl group blocking the N-terminus of the alpha chain.

It catalyses the reaction S-adenosyl-L-methionine + H(+) = S-adenosyl 3-(methylsulfanyl)propylamine + CO2. The protein operates within amine and polyamine biosynthesis; S-adenosylmethioninamine biosynthesis; S-adenosylmethioninamine from S-adenosyl-L-methionine: step 1/1. Functionally, catalyzes the decarboxylation of S-adenosylmethionine to S-adenosylmethioninamine (dcAdoMet), the propylamine donor required for the synthesis of the polyamines spermine and spermidine from the diamine putrescine. This Shigella dysenteriae serotype 1 (strain Sd197) protein is S-adenosylmethionine decarboxylase proenzyme.